Here is a 1698-residue protein sequence, read N- to C-terminus: MSLPLKPLTIDSNNKQLDSKQKKFRANVERALERFDSVTEWADYIASLGTLLKALQSWSPKFQNVRYYVPSPYQVSRRLTSSLSPALPAGVHQKTLEVYTYIFEHIGLETLATECNIWIPGILPLMTYASMSVRSHLIELYDNYILLLPQTTLRLLIRPLISSLLPGIDDESNDFLPLTLKLIETLQENLDDDSLFWQTLFLVMTANKGRRLGGLTWLTRKFPSLNAVPHLVNKIKMEAEENPSETETNDSHLDRKKRKEEAFKVLLPAAKDLVTPEPGLLIRCLVGCLEDENDILIKRSVLDLLLQRLRLDSPVLNVLITSEDKKLLIMSCCRTTLSKDMSLNRRIWNWLLGPTAGGMLNNNGGNSMEYTTSVKSANEESNVYFTKYGLSALLEGLSDLLSEEESVLTAFRISMAVMDRWEIGSLVIPELFIPLLYSSEKFKQNEQIMKTARTFFDNTETNIIWGKLFQELEDIKNLKILDFVLTNFNIGNDEEIIVRHLPLILLTLLALPSNDKDFDNIYKLQKFSLYNKLLNYIPERALLPLSHSKLKHDDEVSCEELLAKIRGFYTNVSNPSSILEKENIAERLPPFTTEDLTFLIADLIQKKLLSSLWDLENINESSKLFIAIFEKIPESEELKGRSHISWSDKKITQSIFEAIPRLCESNNDAKSEEIVGIVEIFGNYLYSRMEFIESMKLLKVVMMAVWKSLKDPRHQILGVKNLKTLNRFIPSKFIESALVYTFVEEEDISERLSVLDLLWTQLDSDSNLIRRPLELILGELFDDQNPFYLTVSKWILSILNSGSASRLFYILTDNILKVNRLEKERLDERDDLDMLTYEFQMLAYVLKTNNGRTRKVFSTELTSIKSSTIWKNEDVSTYKSLLLVTLMRFLNIKSNTHAKSIRSALILLDILLDGTEQNFKDIVIFLLQMSSKYIAEEGIEPELIAVSLLDIVSKVLRLSHDNGIKLDIFDDNAAHLKYIDFLVTSVSNMKSPLIVTAYVKLLSESIVYFENSIFRMILPLSASLVQCVQRLFLLEKREGGYYQPIALLLGGLEELLEISHGYLVTEEREGYFSGSNLKGDFIQSVVSNVFSSDSSNEESKIQGERDVILQSFRQVISCCLDIWYWAHNISCKSNDDSSLDATNHNSYKFKFRSKKLLETLFLLEPLELLENLISIRSDNTTVTLVHVLDGNKPAITIPHLLYGVIIRYNRTASVKFSNRDGSRSSTTKLTKGEPSMLKRLSGESIIAFLFNYVDSVENSAMEEFYGDFLLFFREVATNYNLYSDVSLSILKLVALISGKVSKTQFGEQKRVRREISDVFFKYLPNAFINFTNLYRGHPDSFKDLEFVVWRVQYIVNDQIGGDKFNTTLATIVNQCLTPYIKPKSEKTIPGYVLELAAVVSHLGSKVKSWRLLIAELFQNDKKLSVIGSDQTWEKIIYEWSIYPENKSKILNDLLLEIGSKRSSVTPTLITFNLGSDSEVEYKCQNLLKISYLLMVSPNDAYLLHFSSLISCIFHYLVSKDIKLKGSCWILLRVLLLRFSESHFNDYWSMISYCLQTNLQEFYESLQIQSEVDPQTILQVCKTLDLLLLLNMEGFTSTNEWIFVIDTINCVYKTNSFVALVDEIAEFKDYEITKTDDLELPTTLKDGLPLLRGIHKIERHTQLRSFFQNLSYLHYEKVYGLGSVDLYGCGEDLKKDILS.

S244 carries the phosphoserine modification.

This sequence belongs to the DOP1 family. As to quaternary structure, interacts with MON2.

It is found in the golgi apparatus membrane. Required for traffic between late Golgi and early endosomes, and for the normal structure and organization of the endoplasmic reticulum. Required for normal cellular morphogenesis. The protein is Protein DOP1 (DOP1) of Saccharomyces cerevisiae (strain ATCC 204508 / S288c) (Baker's yeast).